The chain runs to 534 residues: Endoglucanase 5 (534 aa).

An N-terminal signal peptide occupies residues Met-1–Ala-27. Asp-82 serves as the catalytic Nucleophile. Active-site residues include His-432, Asp-484, and Glu-493. The segment at Arg-515–Leu-534 is disordered.

The protein belongs to the glycosyl hydrolase 9 (cellulase E) family.

It localises to the secreted. It carries out the reaction Endohydrolysis of (1-&gt;4)-beta-D-glucosidic linkages in cellulose, lichenin and cereal beta-D-glucans.. The polypeptide is Endoglucanase 5 (Oryza sativa subsp. japonica (Rice)).